The sequence spans 426 residues: DNA polymerase processivity factor component A20 (426 aa).

It belongs to the poxviruses A20 family. As to quaternary structure, interacts with the DNA polymerase catalytic subunit E9. Interacts with UDG. Component of the Uracil-DNA glycosylase(UDG)-A20-polymerase complex; A20 and UDG form a heterodimeric processivity factor that associates with E9 to form the processive polymerase holoenzyme. Interacts with D5.

Its function is as follows. Plays an essential role in viral DNA replication by acting as the polymerase processivity factor together with protein D4. May serve as a bridge which links the DNA polymerase E9 and the uracil DNA glycosylase. In Vaccinia virus (strain Ankara) (VACV), this protein is DNA polymerase processivity factor component A20.